The following is a 188-amino-acid chain: FMN-dependent NADPH-azoreductase (188 aa).

This sequence belongs to the azoreductase type 2 family. In terms of assembly, homotetramer. Requires FMN as cofactor.

In terms of biological role, catalyzes the reductive cleavage of azo bond in aromatic azo compounds to the corresponding amines. Requires NADPH, but not NADH, as an electron donor for its activity. The sequence is that of FMN-dependent NADPH-azoreductase (azo1) from Staphylococcus aureus (strain MSSA476).